A 229-amino-acid chain; its full sequence is Enolase-phosphatase E1 (229 aa).

The disordered stretch occupies residues R207–A229. The span at R218–A229 shows a compositional bias: basic and acidic residues.

Belongs to the HAD-like hydrolase superfamily. MasA/MtnC family. Monomer. Mg(2+) serves as cofactor.

The catalysed reaction is 5-methylsulfanyl-2,3-dioxopentyl phosphate + H2O = 1,2-dihydroxy-5-(methylsulfanyl)pent-1-en-3-one + phosphate. Its pathway is amino-acid biosynthesis; L-methionine biosynthesis via salvage pathway; L-methionine from S-methyl-5-thio-alpha-D-ribose 1-phosphate: step 3/6. It participates in amino-acid biosynthesis; L-methionine biosynthesis via salvage pathway; L-methionine from S-methyl-5-thio-alpha-D-ribose 1-phosphate: step 4/6. Functionally, bifunctional enzyme that catalyzes the enolization of 2,3-diketo-5-methylthiopentyl-1-phosphate (DK-MTP-1-P) into the intermediate 2-hydroxy-3-keto-5-methylthiopentenyl-1-phosphate (HK-MTPenyl-1-P), which is then dephosphorylated to form the acireductone 1,2-dihydroxy-3-keto-5-methylthiopentene (DHK-MTPene). The protein is Enolase-phosphatase E1 of Klebsiella pneumoniae (strain 342).